The primary structure comprises 881 residues: Phosphoenolpyruvate carboxylase (881 aa).

Active-site residues include His-138 and Lys-545.

This sequence belongs to the PEPCase type 1 family. Mg(2+) serves as cofactor.

It carries out the reaction oxaloacetate + phosphate = phosphoenolpyruvate + hydrogencarbonate. Forms oxaloacetate, a four-carbon dicarboxylic acid source for the tricarboxylic acid cycle. The protein is Phosphoenolpyruvate carboxylase of Shewanella oneidensis (strain ATCC 700550 / JCM 31522 / CIP 106686 / LMG 19005 / NCIMB 14063 / MR-1).